The sequence spans 233 residues: Biosynthetic peptidoglycan transglycosylase (233 aa).

The chain crosses the membrane as a helical span at residues 8–28 (LIALPVGIFIFFNAYVYGNII).

Belongs to the glycosyltransferase 51 family.

The protein resides in the cell inner membrane. It catalyses the reaction [GlcNAc-(1-&gt;4)-Mur2Ac(oyl-L-Ala-gamma-D-Glu-L-Lys-D-Ala-D-Ala)](n)-di-trans,octa-cis-undecaprenyl diphosphate + beta-D-GlcNAc-(1-&gt;4)-Mur2Ac(oyl-L-Ala-gamma-D-Glu-L-Lys-D-Ala-D-Ala)-di-trans,octa-cis-undecaprenyl diphosphate = [GlcNAc-(1-&gt;4)-Mur2Ac(oyl-L-Ala-gamma-D-Glu-L-Lys-D-Ala-D-Ala)](n+1)-di-trans,octa-cis-undecaprenyl diphosphate + di-trans,octa-cis-undecaprenyl diphosphate + H(+). Its pathway is cell wall biogenesis; peptidoglycan biosynthesis. Its function is as follows. Peptidoglycan polymerase that catalyzes glycan chain elongation from lipid-linked precursors. The polypeptide is Biosynthetic peptidoglycan transglycosylase (Neisseria meningitidis serogroup B (strain ATCC BAA-335 / MC58)).